We begin with the raw amino-acid sequence, 309 residues long: tRNA uridine(34) hydroxylase (309 aa).

The region spanning 137–232 (RGDEVVFFDG…YGEKYGDKGL (96 aa)) is the Rhodanese domain. Cysteine 192 acts as the Cysteine persulfide intermediate in catalysis.

The protein belongs to the TrhO family.

It carries out the reaction uridine(34) in tRNA + AH2 + O2 = 5-hydroxyuridine(34) in tRNA + A + H2O. Its function is as follows. Catalyzes oxygen-dependent 5-hydroxyuridine (ho5U) modification at position 34 in tRNAs. The polypeptide is tRNA uridine(34) hydroxylase (Corynebacterium jeikeium (strain K411)).